The chain runs to 131 residues: Bypass of stop codon protein 4 (131 aa).

This chain is Bypass of stop codon protein 4 (BSC4), found in Saccharomyces cerevisiae (strain ATCC 204508 / S288c) (Baker's yeast).